Reading from the N-terminus, the 186-residue chain is dCTP deaminase (186 aa).

DCTP is bound at residue 107 to 112 (KSTYAR). Glu-133 (proton donor/acceptor) is an active-site residue. DCTP is bound by residues Gln-152, Tyr-166, and Gln-176.

It belongs to the dCTP deaminase family. Homotrimer.

It carries out the reaction dCTP + H2O + H(+) = dUTP + NH4(+). The protein operates within pyrimidine metabolism; dUMP biosynthesis; dUMP from dCTP (dUTP route): step 1/2. Functionally, catalyzes the deamination of dCTP to dUTP. In Campylobacter lari (strain RM2100 / D67 / ATCC BAA-1060), this protein is dCTP deaminase.